The chain runs to 126 residues: Glycine cleavage system H protein (126 aa).

Residues Lys22–Glu103 form the Lipoyl-binding domain. The residue at position 63 (Lys63) is an N6-lipoyllysine.

This sequence belongs to the GcvH family. As to quaternary structure, the glycine cleavage system is composed of four proteins: P, T, L and H. It depends on (R)-lipoate as a cofactor.

In terms of biological role, the glycine cleavage system catalyzes the degradation of glycine. The H protein shuttles the methylamine group of glycine from the P protein to the T protein. This is Glycine cleavage system H protein from Thermoanaerobacter sp. (strain X514).